The sequence spans 156 residues: MKLQLIAVGTKMPDWIQAGFTDYLRRFPKDMPFDLIEIPAGKRGKNADIKRILEKEGEQMLAAVSKGSRIVTLDIPGSRWETPQLAQQLEHWKRDGRDVSLLIGGPEGLAPACKAAAEQSWSLSPLTLPHPLVRVLVAESLYRAWSITTNHPYHRE.

S-adenosyl-L-methionine is bound by residues Leu73, Gly104, and 123-128 (LSPLTL).

Belongs to the RNA methyltransferase RlmH family. Homodimer.

It is found in the cytoplasm. The catalysed reaction is pseudouridine(1915) in 23S rRNA + S-adenosyl-L-methionine = N(3)-methylpseudouridine(1915) in 23S rRNA + S-adenosyl-L-homocysteine + H(+). Functionally, specifically methylates the pseudouridine at position 1915 (m3Psi1915) in 23S rRNA. This Photorhabdus laumondii subsp. laumondii (strain DSM 15139 / CIP 105565 / TT01) (Photorhabdus luminescens subsp. laumondii) protein is Ribosomal RNA large subunit methyltransferase H.